The primary structure comprises 1157 residues: Peroxisomal ATPase PEX1 (1157 aa).

2 disordered regions span residues 187-221 (SISS…NNGE) and 1135-1157 (SGRD…STLM). A compositionally biased stretch (low complexity) spans 205-217 (SSTSTATGRRSVT).

It belongs to the AAA ATPase family. In terms of assembly, interacts with PEX6; forming the PEX1-PEX6 AAA ATPase complex, which is composed of a heterohexamer formed by a trimer of PEX1-PEX6 dimers.

It is found in the membrane. It carries out the reaction ATP + H2O = ADP + phosphate + H(+). Its function is as follows. Component of the PEX1-PEX6 AAA ATPase complex involved in peroxisome biosynthesis. The complex acts as a protein dislocase complex that mediates the ATP-dependent extraction of the PEX5 receptor from peroxisomal membranes, an essential step for PEX5 recycling. Specifically recognizes PEX5 monoubiquitinated at 'Cys-6', and pulls it out of the peroxisome lumen through the PEX2-PEX10-PEX12 retrotranslocation channel. Extraction by the PEX1-PEX6 AAA ATPase complex is accompanied by unfolding of the TPR repeats and release of bound cargo from PEX5. The sequence is that of Peroxisomal ATPase PEX1 from Komagataella pastoris (Yeast).